Consider the following 303-residue polypeptide: Protein transport protein SEC13-2 (303 aa).

6 WD repeats span residues 7 to 46 (AHEG…NSSS), 53 to 95 (GHEG…GKMQ), 102 to 143 (VHSA…IAST), 149 to 202 (AHKF…ETYV), 209 to 251 (GHKD…KKND), and 261 to 300 (KFEQ…KWEE).

This sequence belongs to the WD repeat SEC13 family. The COPII coat is composed of at least 5 proteins: the SEC23/24 complex, the SEC13/31 complex, and the protein SAR1. Component of the nuclear pore complex (NPC). NPC constitutes the exclusive means of nucleocytoplasmic transport. NPCs allow the passive diffusion of ions and small molecules and the active, nuclear transport receptor-mediated bidirectional transport of macromolecules such as proteins, RNAs, ribonucleoparticles (RNPs), and ribosomal subunits across the nuclear envelope. Due to its 8-fold rotational symmetry, all subunits are present with 8 copies or multiples thereof.

The protein localises to the cytoplasmic vesicle. Its subcellular location is the COPII-coated vesicle membrane. It localises to the endoplasmic reticulum membrane. It is found in the nucleus. The protein resides in the nuclear pore complex. Component of the coat protein complex II (COPII) which promotes the formation of transport vesicles from the endoplasmic reticulum (ER). The coat has two main functions, the physical deformation of the endoplasmic reticulum membrane into vesicles and the selection of cargo molecules. It also functions as a component of the nuclear pore complex (NPC). NPC components, collectively referred to as nucleoporins (NUPs), can play the role of both NPC structural components and of docking or interaction partners for transiently associated nuclear transport factors. SEC13 is required for efficient mRNA export from the nucleus to the cytoplasm and for correct nuclear pore biogenesis and distribution. This is Protein transport protein SEC13-2 (SEC132) from Candida glabrata (strain ATCC 2001 / BCRC 20586 / JCM 3761 / NBRC 0622 / NRRL Y-65 / CBS 138) (Yeast).